The sequence spans 99 residues: Large ribosomal subunit protein eL36 (99 aa).

It belongs to the eukaryotic ribosomal protein eL36 family. Component of the large ribosomal subunit. Mature ribosomes consist of a small (40S) and a large (60S) subunit. The 40S subunit contains about 32 different proteins and 1 molecule of RNA (18S). The 60S subunit contains 45 different proteins and 3 molecules of RNA (25S, 5.8S and 5S).

The protein resides in the cytoplasm. Its function is as follows. Component of the ribosome, a large ribonucleoprotein complex responsible for the synthesis of proteins in the cell. The small ribosomal subunit (SSU) binds messenger RNAs (mRNAs) and translates the encoded message by selecting cognate aminoacyl-transfer RNA (tRNA) molecules. The large subunit (LSU) contains the ribosomal catalytic site termed the peptidyl transferase center (PTC), which catalyzes the formation of peptide bonds, thereby polymerizing the amino acids delivered by tRNAs into a polypeptide chain. The nascent polypeptides leave the ribosome through a tunnel in the LSU and interact with protein factors that function in enzymatic processing, targeting, and the membrane insertion of nascent chains at the exit of the ribosomal tunnel. In Candida albicans (strain SC5314 / ATCC MYA-2876) (Yeast), this protein is Large ribosomal subunit protein eL36.